A 1331-amino-acid chain; its full sequence is Mitogen-activated protein kinase kinase kinase 15 (1331 aa).

Residues 1-13 (MEGGGGSGGGGGP) show a composition bias toward gly residues. Residues 1-61 (MEGGGGSGGG…GEAEGGRGPR (61 aa)) form a disordered region. The region spanning 656 to 912 (NGERVVLGKG…AADLLQEGFL (257 aa)) is the Protein kinase domain. ATP contacts are provided by residues 662-670 (LGKGSYGIV) and K685. Residue D777 is the Proton acceptor of the active site. Disordered stretches follow at residues 934 to 964 (GTGT…SDAQ) and 983 to 1005 (LSVP…EERD). Residues 940–962 (LPSSGELVGSSSSEHGSISPDSD) show a composition bias toward low complexity. The segment covering 992 to 1005 (LDDRSTALPPEERD) has biased composition (basic and acidic residues). A coiled-coil region spans residues 1216–1236 (LVQKEREYQNLLRLILDQKTQ).

Belongs to the protein kinase superfamily. STE Ser/Thr protein kinase family. MAP kinase kinase kinase subfamily. Mg(2+) serves as cofactor.

The enzyme catalyses L-seryl-[protein] + ATP = O-phospho-L-seryl-[protein] + ADP + H(+). The catalysed reaction is L-threonyl-[protein] + ATP = O-phospho-L-threonyl-[protein] + ADP + H(+). With respect to regulation, contains an N-terminal autoinhibitory domain. Activated by phosphorylation at Thr-816, inhibited by phosphorylation at Ser-928. Its function is as follows. Serine/threonine kinase which acts as a component of the MAP kinase signal transduction pathway. Once activated, acts as an upstream activator of the p38 MAPK signal transduction cascade through the phosphorylation and activation of several MAP kinase kinases. May function in a signal transduction pathway that is activated by various cell stresses and leads to apoptosis. Involved in phosphorylation of WNK4 in response to osmotic stress or hypotonic low-chloride stimulation via the p38 MAPK signal transduction cascade. This Mus musculus (Mouse) protein is Mitogen-activated protein kinase kinase kinase 15.